The sequence spans 166 residues: Phospholipase A2 inhibitor CgMIP-II (166 aa).

Residues 1–19 (MRLILLSGLLLLGTFLANG) form the signal peptide. A C-type lectin domain is found at 46–161 (LRYALMTVHN…CDDNLLVVCE (116 aa)). Cystine bridges form between cysteine 83–cysteine 160 and cysteine 138–cysteine 152. N-linked (GlcNAc...) asparagine glycosylation is present at asparagine 122.

The protein belongs to the alpha-type phospholipase A2 inhibitor family. Homomer composed of 20-25-kDa subunits that form oligomers of 180 kDa. Post-translationally, N-glycosylated. The glycosidic chain may contain superficial sialic acid residues. As to expression, expressed by the liver.

The protein resides in the secreted. Its function is as follows. Selectively inhibits the toxic properties of myotoxin-II from the same venom (AC P81165). Does not inhibit PLA2, anti-coagulant and lethal activities of the basic myotoxin I from the same venom (AC P0DQP6), nor the different crotoxin forms (heterodimer or subunit B alone). Does not block the enzymatic activity of crude acidic PLA2 fractions from the same venom. The polypeptide is Phospholipase A2 inhibitor CgMIP-II (Cerrophidion godmani (Porthidium godmani)).